The sequence spans 91 residues: YcgL domain-containing protein Sde_1339 (91 aa).

The YcgL domain maps to 1–85; sequence MIVDIYRSAK…PPESYMNEIP (85 aa). Residues 72 to 91 form a disordered region; that stretch reads QMPPPPESYMNEIPNDKMPR.

The sequence is that of YcgL domain-containing protein Sde_1339 from Saccharophagus degradans (strain 2-40 / ATCC 43961 / DSM 17024).